We begin with the raw amino-acid sequence, 305 residues long: Taste receptor type 2 member 13 (305 aa).

Residues 1 to 7 lie on the Extracellular side of the membrane; that stretch reads MGSNVYG. Residues 8-28 traverse the membrane as a helical segment; the sequence is ILTMVMIAEFVFGNMSNGFIV. Residues 29–43 are Cytoplasmic-facing; sequence LINCIDWVRKGTLSS. A helical transmembrane segment spans residues 44–64; the sequence is IGWILLFLAISRMVLIWEMLI. Topologically, residues 65–88 are extracellular; that stretch reads TWIKYMKYSFSFVTGTELRGIMFT. Residues 89–109 form a helical membrane-spanning segment; the sequence is WVISNHFSLWLATILSIFYLL. Over 110–128 the chain is Cytoplasmic; that stretch reads KIASFSKPVFLYLKWREKK. Residues 129 to 149 traverse the membrane as a helical segment; it reads VLLIVLLGNLIFLMLNILQIN. The Extracellular portion of the chain corresponds to 150-182; that stretch reads KHIEHWMYQYERNITWSSRVSDFAGFSNLVLLE. Residue Asn162 is glycosylated (N-linked (GlcNAc...) asparagine). Residues 183–203 form a helical membrane-spanning segment; the sequence is MIVFSVTPFTVALVSFILLIF. Residues 204 to 232 are Cytoplasmic-facing; sequence SLWKHLQKMHLNSRGERDPSTKAHVNALR. A helical transmembrane segment spans residues 233 to 253; it reads IMVSFLLLYATYFISFFLSLI. Over 254-262 the chain is Extracellular; the sequence is PMAHKTRLG. Residues 263–283 traverse the membrane as a helical segment; it reads LMFSITVGLFYPSSHSFILIL. The Cytoplasmic portion of the chain corresponds to 284-305; that stretch reads GHSNLRQASLWVMTYLKCGQKH.

Belongs to the G-protein coupled receptor T2R family.

The protein resides in the cell membrane. In terms of biological role, receptor that may play a role in the perception of bitterness and is gustducin-linked. May play a role in sensing the chemical composition of the gastrointestinal content. The activity of this receptor may stimulate alpha gustducin, mediate PLC-beta-2 activation and lead to the gating of TRPM5. In Mus musculus (Mouse), this protein is Taste receptor type 2 member 13.